Reading from the N-terminus, the 97-residue chain is Putative septation protein SpoVG (97 aa).

The protein belongs to the SpoVG family.

In terms of biological role, essential for sporulation. Interferes with or is a negative regulator of the pathway leading to asymmetric septation. The chain is Putative septation protein SpoVG from Bacillus velezensis (strain DSM 23117 / BGSC 10A6 / LMG 26770 / FZB42) (Bacillus amyloliquefaciens subsp. plantarum).